The sequence spans 227 residues: Cytochrome c oxidase subunit 2 (227 aa).

Topologically, residues 1–14 (MAYPAQMGFQDATS) are mitochondrial intermembrane. A helical transmembrane segment spans residues 15-45 (PIMEELLYFHDHTLMIVFMISSLVLYTISLM). Residues 46-59 (LTTSLTHTNTMNAQ) lie on the Mitochondrial matrix side of the membrane. The chain crosses the membrane as a helical span at residues 60 to 87 (EVETVWTILPAIICILIALPSLRILYMM). The Mitochondrial intermembrane portion of the chain corresponds to 88–227 (DEINNPSLTI…YFEKWLLTML (140 aa)). Residues His161, Cys196, Glu198, Cys200, His204, and Met207 each coordinate Cu cation. Glu198 provides a ligand contact to Mg(2+). A Phosphotyrosine modification is found at Tyr218.

Belongs to the cytochrome c oxidase subunit 2 family. As to quaternary structure, component of the cytochrome c oxidase (complex IV, CIV), a multisubunit enzyme composed of 14 subunits. The complex is composed of a catalytic core of 3 subunits MT-CO1, MT-CO2 and MT-CO3, encoded in the mitochondrial DNA, and 11 supernumerary subunits COX4I, COX5A, COX5B, COX6A, COX6B, COX6C, COX7A, COX7B, COX7C, COX8 and NDUFA4, which are encoded in the nuclear genome. The complex exists as a monomer or a dimer and forms supercomplexes (SCs) in the inner mitochondrial membrane with NADH-ubiquinone oxidoreductase (complex I, CI) and ubiquinol-cytochrome c oxidoreductase (cytochrome b-c1 complex, complex III, CIII), resulting in different assemblies (supercomplex SCI(1)III(2)IV(1) and megacomplex MCI(2)III(2)IV(2)). Found in a complex with TMEM177, COA6, COX18, COX20, SCO1 and SCO2. Interacts with TMEM177 in a COX20-dependent manner. Interacts with COX20. Interacts with COX16. Cu cation serves as cofactor.

The protein resides in the mitochondrion inner membrane. It carries out the reaction 4 Fe(II)-[cytochrome c] + O2 + 8 H(+)(in) = 4 Fe(III)-[cytochrome c] + 2 H2O + 4 H(+)(out). Its function is as follows. Component of the cytochrome c oxidase, the last enzyme in the mitochondrial electron transport chain which drives oxidative phosphorylation. The respiratory chain contains 3 multisubunit complexes succinate dehydrogenase (complex II, CII), ubiquinol-cytochrome c oxidoreductase (cytochrome b-c1 complex, complex III, CIII) and cytochrome c oxidase (complex IV, CIV), that cooperate to transfer electrons derived from NADH and succinate to molecular oxygen, creating an electrochemical gradient over the inner membrane that drives transmembrane transport and the ATP synthase. Cytochrome c oxidase is the component of the respiratory chain that catalyzes the reduction of oxygen to water. Electrons originating from reduced cytochrome c in the intermembrane space (IMS) are transferred via the dinuclear copper A center (CU(A)) of subunit 2 and heme A of subunit 1 to the active site in subunit 1, a binuclear center (BNC) formed by heme A3 and copper B (CU(B)). The BNC reduces molecular oxygen to 2 water molecules using 4 electrons from cytochrome c in the IMS and 4 protons from the mitochondrial matrix. This Daubentonia madagascariensis (Aye-aye) protein is Cytochrome c oxidase subunit 2 (MT-CO2).